A 288-amino-acid polypeptide reads, in one-letter code: uncharacterized protein (288 aa).

The protein to M.bovis Mb1522c, M.leprae ML1804 and M.avium MAV321.

This is an uncharacterized protein from Mycobacterium tuberculosis (strain ATCC 25618 / H37Rv).